Here is a 337-residue protein sequence, read N- to C-terminus: Mortality factor related protein 1 (337 aa).

Residues 7–55 form the Tudor-knot domain; sequence FEVGENVACIYKGKPYDAKITDIKTNSDGKELYCVHFKGWNNRYDEKIP. A disordered region spans residues 75-113; that stretch reads HNAELPTTALKPKKKSLAAEAPRDDRDDTPGTSKGKKAK. Positions 122-327 constitute an MRG domain; the sequence is TADDMKVELP…ASNDYYRRSL (206 aa).

Component of the SIN3S complex, which contains at least sin-3, hda-1, athp-1 and mrg-1. Interacts with cfp-1, a component of the SET2 complex. Interacts with rfp-1. In terms of tissue distribution, expressed in oocytes (at protein level). Expressed mainly in germ cells, but also at lower levels in several somatic cell types, including intestinal cells.

It localises to the nucleus. The protein resides in the chromosome. Its function is as follows. Protein involved in the remodeling of chromatin thereby regulating various processes including transcription, chromosome synapsis and genome integrity. Mainly binds genomic loci carrying trimethylated histone H3 'Lys-36' (H3K36me3) or 'Lys-4' (H3K4me3), and acetylated histone H3 'Lys-9' (H3K9ac), 'Lys-27' (H3K27ac). During meiosis, required for the presynaptic pairing of homologous chromosomal regions outside of the pairing center and for the progression of chromosome synapsis. Essential maternal factor required in postembryonic germline development and in maintaining germ cell identity. Plays an important role in maintaining genomic integrity in primordial germ cells (PGCs) during meiosis by regulating DNA double-strand break (DSB) repair and synapsis. Also, required for chromatin-based transcriptional silencing in PGCs and for silencing of X-linked genes in the maternal germ line. By retaining histone acetyltransferase, cbp-1, in euchromatin, promotes the anchoring of heterochromatin at the inner nuclear membrane in intestinal and hypodermal cells. In Caenorhabditis elegans, this protein is Mortality factor related protein 1.